Here is a 245-residue protein sequence, read N- to C-terminus: Orotidine 5'-phosphate decarboxylase (245 aa).

Residues aspartate 22, lysine 44, 71–80 (DLKFHDIPNT), threonine 131, arginine 192, glutamine 201, glycine 221, and arginine 222 each bind substrate. Residue lysine 73 is the Proton donor of the active site.

Belongs to the OMP decarboxylase family. Type 1 subfamily. In terms of assembly, homodimer.

The catalysed reaction is orotidine 5'-phosphate + H(+) = UMP + CO2. Its pathway is pyrimidine metabolism; UMP biosynthesis via de novo pathway; UMP from orotate: step 2/2. Catalyzes the decarboxylation of orotidine 5'-monophosphate (OMP) to uridine 5'-monophosphate (UMP). This Escherichia coli O45:K1 (strain S88 / ExPEC) protein is Orotidine 5'-phosphate decarboxylase.